Reading from the N-terminus, the 146-residue chain is MIVICDHDNLDAWLALRTALWPSGSPEDHRAEMREILASPHHTAFMARGLDGAFVAFAEVALRYDYVNGCESSPVAFLEGIYTAERARRQGWAARLIAQVQEWAKQQGCSELASDTDIANLDSQRLHAALGFAETERVVFYRKTLG.

In terms of domain architecture, N-acetyltransferase spans 1–146 (MIVICDHDNL…RVVFYRKTLG (146 aa)). Residues Trp21, Tyr66, Glu79, and Asp115 each contribute to the substrate site. Residue Asn120 participates in acetyl-CoA binding. Glu136 contacts substrate.

As to quaternary structure, homodimer.

It catalyses the reaction kanamycin B + acetyl-CoA = N(6')-acetylkanamycin B + CoA + H(+). Functionally, catalyzes the transfer of an acetyl group from acetyl-CoA to the 6'-amino group of aminoglycoside molecules conferring resistance to antibiotics containing the purpurosamine ring including amikacin, tobramycin, netilmicin, isepamicin and sisomicin. The chain is Aminoglycoside N(6')-acetyltransferase type 1 from Serratia marcescens.